We begin with the raw amino-acid sequence, 445 residues long: Tyrosine--tRNA ligase, mitochondrial (445 aa).

Residue Y33 coordinates L-tyrosine. D37 is a binding site for ATP. Residues 38 to 47 carry the 'HIGH' region motif; sequence PTAASLHVGN. Residues D77, Y184, Q188, D191, and Q210 each contribute to the L-tyrosine site. A 'KMSKS' region motif is present at residues 245-249; that stretch reads KLGKS. K248 is a binding site for ATP. The 62-residue stretch at 384 to 445 folds into the S4 RNA-binding domain; that stretch reads QPFSRLLRTL…GKRTFVLDSL (62 aa).

This sequence belongs to the class-I aminoacyl-tRNA synthetase family. As to quaternary structure, homodimer.

It is found in the mitochondrion matrix. It carries out the reaction tRNA(Tyr) + L-tyrosine + ATP = L-tyrosyl-tRNA(Tyr) + AMP + diphosphate + H(+). Functionally, catalyzes the attachment of tyrosine to tRNA(Tyr) in a two-step reaction: tyrosine is first activated by ATP to form Tyr-AMP and then transferred to the acceptor end of tRNA(Tyr). The chain is Tyrosine--tRNA ligase, mitochondrial from Schizosaccharomyces pombe (strain 972 / ATCC 24843) (Fission yeast).